The chain runs to 551 residues: Interferon-induced, double-stranded RNA-activated protein kinase (551 aa).

Ala2 bears the N-acetylalanine mark. Residues Ala2–Gly180 are (Microbial infection) Interaction with HCV NS5A. Residues Phe9–Lys77 enclose the DRBM 1 domain. Lys69 participates in a covalent cross-link: Glycyl lysine isopeptide (Lys-Gly) (interchain with G-Cter in ISG15). At Ser83 the chain carries Phosphoserine. Phosphothreonine; by autocatalysis occurs at positions 88, 89, and 90. Positions Asn100–Ser167 constitute a DRBM 2 domain. A Phosphotyrosine; by autocatalysis modification is found at Tyr101. A Glycyl lysine isopeptide (Lys-Gly) (interchain with G-Cter in ISG15) cross-link involves residue Lys159. A Phosphotyrosine; by autocatalysis modification is found at Tyr162. The span at Ser202–Ile215 shows a compositional bias: polar residues. The interval Ser202–Leu222 is disordered. Position 242 is a phosphoserine; by autocatalysis (Ser242). Residues Thr255 and Thr258 each carry the phosphothreonine; by autocatalysis modification. The dimerization stretch occupies residues Asp266–Leu362. The interaction with TRAF5 stretch occupies residues Asp266–Cys551. One can recognise a Protein kinase domain in the interval Phe267 to Val538. ATP is bound at residue Ile273 to Val281. Residue Tyr293 is modified to Phosphotyrosine; by autocatalysis. Lys296 contacts ATP. Tandem repeats lie at residues Asp331 to Ser343 and Asp345 to Ser357. Residues Asp331–Ser357 form a 2 X 13 AA approximate repeats region. An interaction with EIF2S1/EIF-2ALPHA region spans residues Glu379–Thr496. The Proton acceptor role is filled by Asp414. Residue Asp432 participates in Mg(2+) binding. Phosphothreonine; by autocatalysis occurs at positions 446 and 451. 2 positions are modified to phosphoserine: Ser456 and Ser542.

This sequence belongs to the protein kinase superfamily. Ser/Thr protein kinase family. GCN2 subfamily. Homodimer. Interacts with STRBP. Interacts with DNAJC3. Forms a complex with FANCA, FANCC, FANCG and HSP70. Interacts with ADAR/ADAR1. Interacts with IRS1. The inactive form interacts with NCK1 and GSN. Interacts (via the kinase catalytic domain) with STAT3 (via SH2 domain), TRAF2 (C-terminus), TRAF5 (C-terminus) and TRAF6 (C-terminus). Interacts with MAP2K6, IKBKB/IKKB, NPM1, TARBP2, NLRP1, NLRP3, NLRC4 and AIM2. Interacts (via DRBM 1 domain) with DUS2L (via DRBM domain). Interacts with DHX9 (via N-terminus) and this interaction is dependent upon activation of the kinase. Interacts with EIF2S1/EIF-2ALPHA; this interaction induces a conformational change in EIF2S1 and its phosphorylation by EIF2AK2. As to quaternary structure, (Microbial infection) Interacts with human cytomegalovirus (HCMV) TRS1; this interaction retains EIF2AK2 to the nucleus and prevents its activation. In terms of assembly, (Microbial infection) Interacts with vaccinia virus protein K3 (K3L); this interaction inhibits EIF2AK2. (Microbial infection) Interacts with human herpes simplex virus 1 (HHV-1) protein US11 in an RNA-dependent manner. As to quaternary structure, (Microbial infection) The inactive form interacts with Toscana virus (TOS) NSS. In terms of assembly, (Microbial infection) Interacts with herpes virus 8 protein v-IRF2; this interaction inhibits EIF2AK2 activation. (Microbial infection) Interacts with vaccinia protein E3. As to quaternary structure, (Microbial infection) Interacts (via N-terminus) with Hepatitis C virus (HCV) mature core protein (via N-terminus); this interaction induces the autophosphorylation of EIF2AK2. In terms of assembly, (Microbial infection) Interacts with Hepatitis C virus (HCV) non-structural protein 5A (NS5A); this interaction leads to disruption of EIF2AK2 dimerization by NS5A. (Microbial infection) Interacts with Hepatitis C virus (HCV) envelope glycoprotein E2; this interaction inhibits EIF2AK2 and blocks its inhibitory effect on protein synthesis and cell growth. As to quaternary structure, (Microbial infection) Interacts with human respiratory syncytial virus (HRSV) nucleoprotein; this interaction inhibits EIF2AK2 phosphorylation of EIF2S1 and blocks EIF2AK2-mediated translation shutoff. In terms of assembly, (Microbial infection) Interacts with human herpesvirus 8 protein MTA/ORF57; this interaction inhibits stress granule formation. Requires Mg(2+) as cofactor. In terms of processing, autophosphorylated on several Ser, Thr and Tyr residues. Autophosphorylation of Thr-451 is dependent on Thr-446 and is stimulated by dsRNA binding and dimerization. Autophosphorylation apparently leads to the activation of the kinase. Tyrosine autophosphorylation is essential for efficient dsRNA-binding, dimerization, and kinase activation. In terms of tissue distribution, highly expressed in thymus, spleen and bone marrow compared to non-hematopoietic tissues such as small intestine, liver, or kidney tissues. Colocalizes with GSK3B and TAU in the Alzheimer disease (AD) brain. Elevated levels seen in breast and colon carcinomas, and which correlates with tumor progression and invasiveness or risk of progression.

Its subcellular location is the cytoplasm. It is found in the nucleus. The protein localises to the perinuclear region. The enzyme catalyses L-seryl-[protein] + ATP = O-phospho-L-seryl-[protein] + ADP + H(+). It catalyses the reaction L-threonyl-[protein] + ATP = O-phospho-L-threonyl-[protein] + ADP + H(+). The catalysed reaction is L-tyrosyl-[protein] + ATP = O-phospho-L-tyrosyl-[protein] + ADP + H(+). With respect to regulation, initially produced in an inactive form and is activated by binding to viral dsRNA, which causes dimerization and autophosphorylation in the activation loop and stimulation of function. ISGylation can activate it in the absence of viral infection. Can also be activated by heparin, pro-inflammatory stimuli, growth factors, cytokines, oxidative stress and the cellular protein PRKRA. Activity is markedly stimulated by manganese ions. Activation is blocked by the viral components HIV-1 Tat protein and large amounts of HIV-1 trans-activation response (TAR) RNA element as well as by the cellular proteins TARBP2, DUS2L, NPM1, NCK1 and ADAR. Down-regulated by Toscana virus (TOS) and Rift valley fever virus (RVFV) NSS which promote its proteasomal degradation. Inhibited by vaccinia virus protein E3, probably via dsRNA sequestering. Its function is as follows. IFN-induced dsRNA-dependent serine/threonine-protein kinase that phosphorylates the alpha subunit of eukaryotic translation initiation factor 2 (EIF2S1/eIF-2-alpha) and plays a key role in the innate immune response to viral infection. Inhibits viral replication via the integrated stress response (ISR): EIF2S1/eIF-2-alpha phosphorylation in response to viral infection converts EIF2S1/eIF-2-alpha in a global protein synthesis inhibitor, resulting to a shutdown of cellular and viral protein synthesis, while concomitantly initiating the preferential translation of ISR-specific mRNAs, such as the transcriptional activator ATF4. Exerts its antiviral activity on a wide range of DNA and RNA viruses including hepatitis C virus (HCV), hepatitis B virus (HBV), measles virus (MV) and herpes simplex virus 1 (HHV-1). Also involved in the regulation of signal transduction, apoptosis, cell proliferation and differentiation: phosphorylates other substrates including p53/TP53, PPP2R5A, DHX9, ILF3, IRS1 and the HHV-1 viral protein US11. In addition to serine/threonine-protein kinase activity, also has tyrosine-protein kinase activity and phosphorylates CDK1 at 'Tyr-4' upon DNA damage, facilitating its ubiquitination and proteasomal degradation. Either as an adapter protein and/or via its kinase activity, can regulate various signaling pathways (p38 MAP kinase, NF-kappa-B and insulin signaling pathways) and transcription factors (JUN, STAT1, STAT3, IRF1, ATF3) involved in the expression of genes encoding pro-inflammatory cytokines and IFNs. Activates the NF-kappa-B pathway via interaction with IKBKB and TRAF family of proteins and activates the p38 MAP kinase pathway via interaction with MAP2K6. Can act as both a positive and negative regulator of the insulin signaling pathway (ISP). Negatively regulates ISP by inducing the inhibitory phosphorylation of insulin receptor substrate 1 (IRS1) at 'Ser-312' and positively regulates ISP via phosphorylation of PPP2R5A which activates FOXO1, which in turn up-regulates the expression of insulin receptor substrate 2 (IRS2). Can regulate NLRP3 inflammasome assembly and the activation of NLRP3, NLRP1, AIM2 and NLRC4 inflammasomes. Plays a role in the regulation of the cytoskeleton by binding to gelsolin (GSN), sequestering the protein in an inactive conformation away from actin. This is Interferon-induced, double-stranded RNA-activated protein kinase (EIF2AK2) from Homo sapiens (Human).